A 361-amino-acid chain; its full sequence is Chorismate synthase (361 aa).

NADP(+) is bound at residue arginine 47. Residues 124-126 (RAS), glycine 286, 301-305 (KPTAT), and arginine 327 each bind FMN.

This sequence belongs to the chorismate synthase family. In terms of assembly, homotetramer. It depends on FMNH2 as a cofactor.

It carries out the reaction 5-O-(1-carboxyvinyl)-3-phosphoshikimate = chorismate + phosphate. It participates in metabolic intermediate biosynthesis; chorismate biosynthesis; chorismate from D-erythrose 4-phosphate and phosphoenolpyruvate: step 7/7. In terms of biological role, catalyzes the anti-1,4-elimination of the C-3 phosphate and the C-6 proR hydrogen from 5-enolpyruvylshikimate-3-phosphate (EPSP) to yield chorismate, which is the branch point compound that serves as the starting substrate for the three terminal pathways of aromatic amino acid biosynthesis. This reaction introduces a second double bond into the aromatic ring system. This is Chorismate synthase from Prochlorococcus marinus (strain NATL2A).